The following is a 698-amino-acid chain: Polyribonucleotide nucleotidyltransferase (698 aa).

Positions 486 and 492 each coordinate Mg(2+). Residues 553-612 (PRIIVRNIPKDRIGELIGPGGKNVRGISELTGAELYIEDDGKVTISGSNQESAEKAAKMV) form the KH domain. An S1 motif domain is found at 622 to 690 (GKIYEGKVKR…KTGKIDLSRK (69 aa)).

The protein belongs to the polyribonucleotide nucleotidyltransferase family. It depends on Mg(2+) as a cofactor.

The protein localises to the cytoplasm. The catalysed reaction is RNA(n+1) + phosphate = RNA(n) + a ribonucleoside 5'-diphosphate. Its function is as follows. Involved in mRNA degradation. Catalyzes the phosphorolysis of single-stranded polyribonucleotides processively in the 3'- to 5'-direction. This is Polyribonucleotide nucleotidyltransferase from Leptospira interrogans serogroup Icterohaemorrhagiae serovar copenhageni (strain Fiocruz L1-130).